Reading from the N-terminus, the 345-residue chain is Splicing factor YJU2 (345 aa).

Positions 43, 46, 80, and 83 each coordinate Zn(2+). The interval 205-345 (KRLRDSDSEE…YSDSDDSSSD (141 aa)) is disordered. The segment covering 217–232 (ENAKERSKKHIADKPT) has biased composition (basic and acidic residues). Low complexity-rich tracts occupy residues 308–317 (SSITSSSASS) and 327–337 (GSSLGLLGAYS).

Belongs to the CWC16 family. YJU2 subfamily. As to quaternary structure, component of the spliceosome. Present in the activated B complex, the catalytically activated B* complex which catalyzes the branching, the catalytic step 1 C complex catalyzing the exon ligation, and the postcatalytic P complex containing the ligated exons (mRNA) and the excised lariat intron.

The protein localises to the nucleus. Part of the spliceosome which catalyzes two sequential transesterification reactions, first the excision of the non-coding intron from pre-mRNA and then the ligation of the coding exons to form the mature mRNA. Plays a role in stabilizing the structure of the spliceosome catalytic core and docking of the branch helix into the active site, producing 5'-exon and lariat intron-3'-intermediates. May protect cells from TP53-dependent apoptosis upon dsDNA break damage through association with PRP19-CD5L complex. The chain is Splicing factor YJU2 from Danio rerio (Zebrafish).